We begin with the raw amino-acid sequence, 545 residues long: CTP synthase (545 aa).

An amidoligase domain region spans residues 1 to 266 (MATNYIFVTG…DTFVCDRFRL (266 aa)). Ser-14 provides a ligand contact to CTP. Ser-14 is a binding site for UTP. ATP contacts are provided by residues 15 to 20 (SLGKGI) and Asp-72. Asp-72 and Glu-140 together coordinate Mg(2+). CTP contacts are provided by residues 147–149 (DIE), 187–192 (KTKPTQ), and Lys-223. Residues 187–192 (KTKPTQ) and Lys-223 contribute to the UTP site. Residue 239 to 241 (KDV) coordinates ATP. The Glutamine amidotransferase type-1 domain maps to 291–542 (TIGMVGKYVE…VAAAKAYQDS (252 aa)). L-glutamine is bound at residue Gly-352. Cys-379 serves as the catalytic Nucleophile; for glutamine hydrolysis. L-glutamine-binding positions include 380 to 383 (LGMQ), Glu-403, and Arg-470. Residues His-515 and Glu-517 contribute to the active site.

It belongs to the CTP synthase family. Homotetramer.

It carries out the reaction UTP + L-glutamine + ATP + H2O = CTP + L-glutamate + ADP + phosphate + 2 H(+). It catalyses the reaction L-glutamine + H2O = L-glutamate + NH4(+). The enzyme catalyses UTP + NH4(+) + ATP = CTP + ADP + phosphate + 2 H(+). The protein operates within pyrimidine metabolism; CTP biosynthesis via de novo pathway; CTP from UDP: step 2/2. Allosterically activated by GTP, when glutamine is the substrate; GTP has no effect on the reaction when ammonia is the substrate. The allosteric effector GTP functions by stabilizing the protein conformation that binds the tetrahedral intermediate(s) formed during glutamine hydrolysis. Inhibited by the product CTP, via allosteric rather than competitive inhibition. In terms of biological role, catalyzes the ATP-dependent amination of UTP to CTP with either L-glutamine or ammonia as the source of nitrogen. Regulates intracellular CTP levels through interactions with the four ribonucleotide triphosphates. The chain is CTP synthase from Actinobacillus pleuropneumoniae serotype 5b (strain L20).